Here is a 6061-residue protein sequence, read N- to C-terminus: Intermembrane lipid transfer protein vps13B (6061 aa).

In terms of domain architecture, Chorein N-terminal spans 2–115 (FESLVADIIA…QLELKRKKLE (114 aa)). Disordered stretches follow at residues 590–623 (PKYK…NNNK), 803–828 (DIKN…NNKN), 1386–1414 (QQQQ…NVSS), 1604–1644 (SSNN…GTLS), 2747–2784 (QTNQ…EDQE), 2950–2972 (GLNN…NSST), 3364–3401 (LNRN…DDDD), 3855–3876 (QQQQ…RNKK), 4011–4068 (QQQQ…FKNN), 4107–4132 (ELEK…RPDE), 4262–4297 (NSSN…YNGR), 4321–4442 (SQSI…TSPG), 4601–4631 (TSSP…KKSL), 4753–4797 (NNNN…TQEF), 4861–4882 (NAGG…SISQ), 5003–5030 (LATK…DGIE), and 5372–5429 (NINN…IGQD). Basic and acidic residues predominate over residues 595–614 (HQENKENKENQENQENENKN). The segment covering 1395–1406 (QQQKEEEQHGGE) has biased composition (basic and acidic residues). The segment covering 2747 to 2756 (QTNQNNQKNR) has biased composition (polar residues). The span at 2774-2784 (NDNDEYDEDQE) shows a compositional bias: acidic residues. The span at 3388–3401 (IDDDDGDGDDDDDD) shows a compositional bias: acidic residues. Positions 4015–4024 (QEKEKEIEKE) are enriched in basic and acidic residues. Low complexity predominate over residues 4031–4040 (LKNNNNISIN). A compositionally biased stretch (acidic residues) spans 4041–4057 (DNDDDDDDDDNDNDENN). Residues 4058–4068 (NENYEFNFKNN) show a composition bias toward low complexity. A compositionally biased stretch (basic and acidic residues) spans 4107–4120 (ELEKKKRERKENSK). 2 stretches are compositionally biased toward low complexity: residues 4330–4383 (TTTT…VGSN) and 4399–4429 (NNNN…NNNN). The segment covering 4430-4441 (SNDNQVNFSTSP) has biased composition (polar residues). Composition is skewed to low complexity over residues 4601 to 4617 (TSSP…NYNN) and 4753 to 4784 (NNNN…SNEN). A compositionally biased stretch (polar residues) spans 4785–4794 (SQDQPPSIKT). Low complexity-rich tracts occupy residues 5013-5030 (DNSN…DGIE) and 5372-5384 (NINN…NNDN). Basic and acidic residues predominate over residues 5385–5409 (NKNKNNNDKNKNNDKNNKNNNDKNN). Low complexity predominate over residues 5410–5421 (NDNNNNNNNNNN).

Belongs to the VPS13 family.

It is found in the membrane. Functionally, mediates the transfer of lipids between membranes at organelle contact sites. This chain is Intermembrane lipid transfer protein vps13B (vps13B), found in Dictyostelium discoideum (Social amoeba).